The chain runs to 255 residues: Uracil-DNA glycosylase (255 aa).

Asp-90 acts as the Proton acceptor in catalysis.

Belongs to the uracil-DNA glycosylase (UDG) superfamily. UNG family.

It localises to the host nucleus. The catalysed reaction is Hydrolyzes single-stranded DNA or mismatched double-stranded DNA and polynucleotides, releasing free uracil.. Excises uracil residues from the DNA which can arise as a result of misincorporation of dUMP residues by DNA polymerase or deamination of cytosines. Therefore may reduce deleterious uracil incorporation into the viral genome, particularly in terminally differentiated cells which lack DNA repair enzymes. The protein is Uracil-DNA glycosylase of Equine herpesvirus 2 (strain 86/87) (EHV-2).